The sequence spans 386 residues: Alanine racemase (386 aa).

Lys38 functions as the Proton acceptor; specific for D-alanine in the catalytic mechanism. At Lys38 the chain carries N6-(pyridoxal phosphate)lysine. Residue Arg136 coordinates substrate. Tyr267 (proton acceptor; specific for L-alanine) is an active-site residue. Met315 serves as a coordination point for substrate.

Belongs to the alanine racemase family. Pyridoxal 5'-phosphate is required as a cofactor.

It catalyses the reaction L-alanine = D-alanine. It participates in amino-acid biosynthesis; D-alanine biosynthesis; D-alanine from L-alanine: step 1/1. In terms of biological role, catalyzes the interconversion of L-alanine and D-alanine. May also act on other amino acids. The polypeptide is Alanine racemase (alr) (Clostridium perfringens (strain ATCC 13124 / DSM 756 / JCM 1290 / NCIMB 6125 / NCTC 8237 / Type A)).